Reading from the N-terminus, the 76-residue chain is Nemertide alpha-1 (76 aa).

The N-terminal stretch at 1 to 28 is a signal peptide; it reads YRIASSSIAKMKTAVFLVGLLFLGLVFA. Residues 29-44 constitute a propeptide that is removed on maturation; the sequence is DEAAIDSEFDQSIDKR. 3 disulfide bridges follow: Cys46–Cys60, Cys53–Cys64, and Cys59–Cys70. 4-hydroxyproline is present on residues Pro72 and Pro73.

Belongs to the nemertide family. Confined to the epidermis and to the mucus layer.

Its subcellular location is the secreted. Its function is as follows. Highly potent toxin against insect sodium channel (Nav) and with less potent activity against mammalian sodium channels. Potently inhibits inactivation of insect sodium channels of B.germanica (BgNav1) (EC(50)=8.6 nM), D.melanogaster (Dm Nav1), and arachnid sodium channel V.destructor (VdNav1). Also delays the inactivation of most mammalian Nav channels tested (human Nav1.1/SCN1A; EC(50)=124.1 nM, rat Nav1.2/SCN2A; EC(50)=359.6 nM, rat Nav1.3/SCN3A; EC(50)=135.4 nM, rat Nav1.4/SCN4A; EC(50)=145.5 nM, human Nav1.5/SCN5A; EC(50)=138.3 nM, mouse Nav1.6/SCN8A; EC(50)=240.4 nM, human Nav1.9/SCN9A; EC(50)=76.5 nM). 1 uM is enough to completely inhibits the inactivation, resulting in sustained non-inactivating currents. In addition, the toxin significantly enhances the recovery from inactivation, and the open state is not required for the toxin to interact with the channel. In vivo, injection into green crabs (Carcinus maenas at 1 mug/kg) of small doses (1-5 ug/kg) results in slow and fast permanent paralysis, whereas injection of high doses (more than 10 ug/kg) causes death. Injection into juvenile Blaptica dubia cockroaches results in death or permanent paralysis at doses higher than 7.1 ug/kg. Injection into brine shrimp (Artemia salina) stops movement or causes death after 24 hours (EC(50)=0.3 uM). In the rare inherited cardiac arrhythmia Brugada syndrome 1 (BRGDA1), this toxin is able to restore the loss of function by reducing channel inactivation, without affecting activation, by binding to Nav1.5/SCN5A. This chain is Nemertide alpha-1, found in Lineus lacteus (Ribbon worm).